A 109-amino-acid polypeptide reads, in one-letter code: Non-structural protein of 12.7 kDa (109 aa).

The protein belongs to the coronaviruses ns12.7 protein family.

The chain is Non-structural protein of 12.7 kDa from Sus scrofa (Pig).